Here is a 258-residue protein sequence, read N- to C-terminus: Regulatory protein RecX (258 aa).

Belongs to the RecX family.

The protein localises to the cytoplasm. Modulates RecA activity. This chain is Regulatory protein RecX, found in Streptococcus mutans serotype c (strain ATCC 700610 / UA159).